A 478-amino-acid chain; its full sequence is Trigger factor (478 aa).

The segment covering 154–167 has biased composition (basic and acidic residues); that stretch reads MAKDSRSFEPREEG. Disordered regions lie at residues 154-173 and 441-478; these read MAKD…AQSG and KEAL…KAAG. Residues 173 to 258 enclose the PPIase FKBP-type domain; that stretch reads GDRVTIDFVG…VKAVAAPGET (86 aa).

This sequence belongs to the FKBP-type PPIase family. Tig subfamily.

The protein localises to the cytoplasm. It carries out the reaction [protein]-peptidylproline (omega=180) = [protein]-peptidylproline (omega=0). Functionally, involved in protein export. Acts as a chaperone by maintaining the newly synthesized protein in an open conformation. Functions as a peptidyl-prolyl cis-trans isomerase. The polypeptide is Trigger factor (Methylorubrum extorquens (strain CM4 / NCIMB 13688) (Methylobacterium extorquens)).